A 162-amino-acid chain; its full sequence is UPF0114 protein Sden_0436 (162 aa).

Transmembrane regions (helical) follow at residues 15–35 (IMAPIYLGLSLILFALGIKFF), 53–73 (LVLITLSLIDITLVGGLLIMV), and 136–156 (IMWYLLIHITFVLSAFAMGYL).

Belongs to the UPF0114 family.

The protein resides in the cell membrane. The chain is UPF0114 protein Sden_0436 from Shewanella denitrificans (strain OS217 / ATCC BAA-1090 / DSM 15013).